We begin with the raw amino-acid sequence, 347 residues long: N-acetyl-gamma-glutamyl-phosphate reductase (347 aa).

C152 is an active-site residue.

This sequence belongs to the NAGSA dehydrogenase family. Type 1 subfamily.

The protein localises to the cytoplasm. The enzyme catalyses N-acetyl-L-glutamate 5-semialdehyde + phosphate + NADP(+) = N-acetyl-L-glutamyl 5-phosphate + NADPH + H(+). It functions in the pathway amino-acid biosynthesis; L-arginine biosynthesis; N(2)-acetyl-L-ornithine from L-glutamate: step 3/4. In terms of biological role, catalyzes the NADPH-dependent reduction of N-acetyl-5-glutamyl phosphate to yield N-acetyl-L-glutamate 5-semialdehyde. The chain is N-acetyl-gamma-glutamyl-phosphate reductase from Neisseria meningitidis serogroup C (strain 053442).